Consider the following 130-residue polypeptide: Ribonuclease P protein component 2 (130 aa).

It belongs to the eukaryotic/archaeal RNase P protein component 2 family. As to quaternary structure, consists of a catalytic RNA component and at least 4-5 protein subunits.

The protein localises to the cytoplasm. It carries out the reaction Endonucleolytic cleavage of RNA, removing 5'-extranucleotides from tRNA precursor.. Its function is as follows. Part of ribonuclease P, a protein complex that generates mature tRNA molecules by cleaving their 5'-ends. In Methanococcus vannielii (strain ATCC 35089 / DSM 1224 / JCM 13029 / OCM 148 / SB), this protein is Ribonuclease P protein component 2.